The sequence spans 213 residues: Large ribosomal subunit protein uL3 (213 aa).

At Gln-151 the chain carries N5-methylglutamine.

It belongs to the universal ribosomal protein uL3 family. In terms of assembly, part of the 50S ribosomal subunit. Forms a cluster with proteins L14 and L19. Post-translationally, methylated by PrmB.

Functionally, one of the primary rRNA binding proteins, it binds directly near the 3'-end of the 23S rRNA, where it nucleates assembly of the 50S subunit. The chain is Large ribosomal subunit protein uL3 from Rhizobium johnstonii (strain DSM 114642 / LMG 32736 / 3841) (Rhizobium leguminosarum bv. viciae).